A 746-amino-acid chain; its full sequence is Exostosin-1 (746 aa).

The Cytoplasmic segment spans residues 1–7; the sequence is MQAKKRY. A helical; Signal-anchor for type II membrane protein transmembrane segment spans residues 8 to 28; it reads FILLSAGSCLALLFYFGGLQF. The Lumenal portion of the chain corresponds to 29 to 746; sequence RASRSHSRRE…RKKYRDIERL (718 aa). A glycan (N-linked (GlcNAc...) asparagine) is linked at N89. Cystine bridges form between C98-C103 and C109-C152. Positions 166 and 203 each coordinate a protein. UDP-binding residues include K267, K269, Y271, and R280. C298 and C312 are joined by a disulfide. H300 contributes to the a protein binding site. UDP-binding residues include Y319 and Y324. N330 is a glycosylation site (N-linked (GlcNAc...) asparagine). Cystine bridges form between C334/C355 and C652/C704. Residues R346 and E349 each contribute to the UDP site.

It belongs to the glycosyltransferase 47 family. Part of the heparan sulfate polymerase, a dimeric complex composed of EXT1 and EXT2. Could also form homooligomeric complexes. Interacts with NDST1. Post-translationally, N-glycosylated.

It is found in the golgi apparatus membrane. The protein resides in the golgi apparatus. It localises to the cis-Golgi network membrane. The protein localises to the endoplasmic reticulum membrane. It carries out the reaction 3-O-{alpha-D-GlcNAc-[(1-&gt;4)-beta-D-GlcA-(1-&gt;4)-alpha-D-GlcNAc](n)-(1-&gt;4)-beta-D-GlcA-(1-&gt;3)-beta-D-Gal-(1-&gt;3)-beta-D-Gal-(1-&gt;4)-beta-D-Xyl}-L-seryl-[protein] + UDP-alpha-D-glucuronate = 3-O-{[(1-&gt;4)-beta-D-GlcA-(1-&gt;4)-alpha-D-GlcNAc](n+1)-(1-&gt;4)-beta-D-GlcA-(1-&gt;3)-beta-D-Gal-(1-&gt;3)-beta-D-Gal-(1-&gt;4)-beta-D-Xyl}-L-seryl-[protein] + UDP + H(+). Its pathway is protein modification; protein glycosylation. Functionally, glycosyltransferase forming with EXT2 the heterodimeric heparan sulfate polymerase which catalyzes the elongation of the heparan sulfate glycan backbone. Glycan backbone extension consists in the alternating transfer of (1-&gt;4)-beta-D-GlcA and (1-&gt;4)-alpha-D-GlcNAc residues from their respective UDP-sugar donors. Both EXT1 and EXT2 are required for the full activity of the polymerase since EXT1 bears the N-acetylglucosaminyl-proteoglycan 4-beta-glucuronosyltransferase activity within the complex while EXT2 carries the glucuronosyl-N-acetylglucosaminyl-proteoglycan 4-alpha-N-acetylglucosaminyltransferase activity. Heparan sulfate proteoglycans are ubiquitous components of the extracellular matrix and play an important role in tissue homeostasis and signaling. The polypeptide is Exostosin-1 (EXT1) (Bos taurus (Bovine)).